The primary structure comprises 66 residues: MILSKHVNFTYHTYNLIYNFYPDLTNFGMPGSIYGLQSSLKTMEKHVEIPQSIHHYSPFYQLPLIF.

This is an uncharacterized protein from Saccharomyces cerevisiae (strain ATCC 204508 / S288c) (Baker's yeast).